Here is an 86-residue protein sequence, read N- to C-terminus: Acyl-CoA-binding protein homolog (86 aa).

An ACB domain is found at 2–86 (VSEQFNAAAE…FVEGLVAKYA (85 aa)). An acyl-CoA is bound by residues K14, 29–33 (YALFK), K51, K55, and Y74.

It belongs to the ACBP family. Expressed in larval and pupal brains. In adults, expressed in cardia, part of the Malpighian tubules, fat body, and gametes of both sexes.

In terms of biological role, binds medium- and long-chain acyl-CoA esters with very high affinity and may function as an intracellular carrier of acyl-CoA esters. May be involved in energy metabolism in a manner that depends on the substrate used for energy production. Dbi and its metabolites are involved in the regulation of multiple biological processes. This chain is Acyl-CoA-binding protein homolog, found in Drosophila melanogaster (Fruit fly).